We begin with the raw amino-acid sequence, 406 residues long: Acetylornithine aminotransferase (406 aa).

Pyridoxal 5'-phosphate is bound by residues 108-109 (GA) and F141. R144 provides a ligand contact to N(2)-acetyl-L-ornithine. 226–229 (DEVQ) contributes to the pyridoxal 5'-phosphate binding site. K255 bears the N6-(pyridoxal phosphate)lysine mark. T283 contributes to the N(2)-acetyl-L-ornithine binding site. T284 is a pyridoxal 5'-phosphate binding site.

It belongs to the class-III pyridoxal-phosphate-dependent aminotransferase family. ArgD subfamily. As to quaternary structure, homodimer. The cofactor is pyridoxal 5'-phosphate.

The protein resides in the cytoplasm. It carries out the reaction N(2)-acetyl-L-ornithine + 2-oxoglutarate = N-acetyl-L-glutamate 5-semialdehyde + L-glutamate. The protein operates within amino-acid biosynthesis; L-arginine biosynthesis; N(2)-acetyl-L-ornithine from L-glutamate: step 4/4. In Pseudomonas putida (strain ATCC 47054 / DSM 6125 / CFBP 8728 / NCIMB 11950 / KT2440), this protein is Acetylornithine aminotransferase.